We begin with the raw amino-acid sequence, 197 residues long: ATP synthase subunit delta', mitochondrial (197 aa).

The transit peptide at 1 to 19 (MFRRATSTFLSRASATRRF) directs the protein to the mitochondrion.

This sequence belongs to the ATPase epsilon chain family. In terms of assembly, F-type ATPases have 2 components, CF(1) - the catalytic core - and CF(0) - the membrane proton channel. CF(1) has five subunits: alpha(3), beta(3), gamma(1), delta(1), epsilon(1). CF(0) has three main subunits: a, b and c.

The protein localises to the mitochondrion. The protein resides in the mitochondrion inner membrane. Its function is as follows. Mitochondrial membrane ATP synthase (F(1)F(0) ATP synthase or Complex V) produces ATP from ADP in the presence of a proton gradient across the membrane which is generated by electron transport complexes of the respiratory chain. F-type ATPases consist of two structural domains, F(1) - containing the extramembraneous catalytic core, and F(0) - containing the membrane proton channel, linked together by a central stalk and a peripheral stalk. During catalysis, ATP turnover in the catalytic domain of F(1) is coupled via a rotary mechanism of the central stalk subunits to proton translocation. Part of the complex F(1) domain and of the central stalk which is part of the complex rotary element. Rotation of the central stalk against the surrounding alpha(3)beta(3) subunits leads to hydrolysis of ATP in three separate catalytic sites on the beta subunits. The chain is ATP synthase subunit delta', mitochondrial from Pisum sativum (Garden pea).